The sequence spans 406 residues: Succinylornithine transaminase (406 aa).

The residue at position 252 (lysine 252) is an N6-(pyridoxal phosphate)lysine.

Belongs to the class-III pyridoxal-phosphate-dependent aminotransferase family. AstC subfamily. Pyridoxal 5'-phosphate is required as a cofactor.

The enzyme catalyses N(2)-succinyl-L-ornithine + 2-oxoglutarate = N-succinyl-L-glutamate 5-semialdehyde + L-glutamate. It participates in amino-acid degradation; L-arginine degradation via AST pathway; L-glutamate and succinate from L-arginine: step 3/5. Its function is as follows. Catalyzes the transamination of N(2)-succinylornithine and alpha-ketoglutarate into N(2)-succinylglutamate semialdehyde and glutamate. Can also act as an acetylornithine aminotransferase. The sequence is that of Succinylornithine transaminase from Escherichia coli (strain 55989 / EAEC).